A 114-amino-acid polypeptide reads, in one-letter code: MAVNIYDTANQLEQELRQTKEFKELKVAYDTMKTNDSAFSLFKDFQEVQMQLSQKQMNGEELTDDEVQKAHDLADKVGNVDEIKSLMGKERNLNQLMNDLNQIITKPVQALYQN.

Belongs to the UPF0342 family.

The chain is UPF0342 protein lp_1415 from Lactiplantibacillus plantarum (strain ATCC BAA-793 / NCIMB 8826 / WCFS1) (Lactobacillus plantarum).